The sequence spans 379 residues: Probable G-protein coupled receptor 27 (379 aa).

The Extracellular segment spans residues 1–26 (MANASEPGGGGSGGGAEAAALGLRLA). A glycan (N-linked (GlcNAc...) asparagine) is linked at Asn-3. The chain crosses the membrane as a helical span at residues 27-47 (TLSLLLCVSLAGNVLFALLIV). The Cytoplasmic portion of the chain corresponds to 48–58 (RERSLHRAPYY). Residues 59 to 79 (LLLDLCLADGLRALACLPAVM) form a helical membrane-spanning segment. At 80-100 (LAARRAAAAAGTPPGALGCKL) the chain is on the extracellular side. An intrachain disulfide couples Cys-98 to Cys-175. The chain crosses the membrane as a helical span at residues 101-121 (LAFLAALFCFHAAFLLLGVGV). Residues 122–142 (TRYLAIAHHRFYAERLAGWPC) lie on the Cytoplasmic side of the membrane. The helical transmembrane segment at 143-163 (AAMLVCAAWALALAAAFPPVL) threads the bilayer. The Extracellular portion of the chain corresponds to 164 to 185 (DGGGADDEDAPCALEQRPDGAP). A helical membrane pass occupies residues 186 to 206 (GALGFLLLLAAVVGATHLVYL). The Cytoplasmic segment spans residues 207-289 (RLLFFIHDRR…FKTEKRLCKM (83 aa)). The helical transmembrane segment at 290 to 310 (FYAITLLFLLLWGPYVVASYL) threads the bilayer. Topologically, residues 311–324 (RVLVRPGAVPQAYL) are extracellular. The chain crosses the membrane as a helical span at residues 325–345 (TASVWLTFAQAGINPVVCFLF). Residues 346-379 (NRELRDCFRAQFPCCQSPQATQATLPCDLKGIGL) are Cytoplasmic-facing.

This sequence belongs to the G-protein coupled receptor 1 family.

The protein localises to the cell membrane. Orphan receptor. Possible candidate for amine-like G-protein coupled receptor. The sequence is that of Probable G-protein coupled receptor 27 (Gpr27) from Mus musculus (Mouse).